The chain runs to 443 residues: Endothelin receptor type B (443 aa).

The signal sequence occupies residues 1 to 26; the sequence is MQPLRSLCGRALVALIFACGVAGVQS. Residues 27–102 lie on the Extracellular side of the membrane; it reads EERGFPPAGA…GPIEIKDTFK (76 aa). The interval 53-89 is disordered; it reads TFWPRGSNASLPRSSSPPQMPKGGRMAGPPARTLTPP. The span at 59-69 shows a compositional bias: polar residues; it reads SNASLPRSSSP. N-linked (GlcNAc...) asparagine glycosylation is present at N60. The helical transmembrane segment at 103–127 threads the bilayer; it reads YINTVVSCLVFVLGIIGNSTLLRII. The Cytoplasmic segment spans residues 128-138; that stretch reads YKNKCMRNGPN. Residues 139–164 form a helical membrane-spanning segment; it reads ILIASLALGDLLHIIIDIPINVYKLL. Over 165 to 176 the chain is Extracellular; the sequence is AEDWPFGVEMCK. Cysteines 175 and 256 form a disulfide. Residues 177–198 form a helical membrane-spanning segment; that stretch reads LVPFIQKASVGITVLSLCALSI. Topologically, residues 199-219 are cytoplasmic; that stretch reads DRYRAVASWSRIKGIGVPKWT. A helical transmembrane segment spans residues 220–244; the sequence is AVEIVLIWVVSVVLAVPEALGFDMI. At 245 to 272 the chain is on the extracellular side; it reads TTDYKGNRLRICLLHPTQKTAFMQFYKT. A helical transmembrane segment spans residues 273 to 297; sequence AKDWWLFSFYFCLPLAITAFFYTLM. Residues 298-325 are Cytoplasmic-facing; that stretch reads TCEMLRKKSGMQIALNDHLKQRREVAKT. S306 bears the Phosphoserine mark. Residues 326 to 351 form a helical membrane-spanning segment; the sequence is VFCLVLVFALCWLPLHLSRILKLTLY. Topologically, residues 352–363 are extracellular; sequence DQNDSNRCELLS. N354 is a glycosylation site (N-linked (GlcNAc...) asparagine). A helical transmembrane segment spans residues 364 to 390; it reads FLLVLDYIGINMASLNSCINPIALYLV. Residues 391 to 443 are Cytoplasmic-facing; it reads SKRFKNCFKSCLCCWCQSFEEKQSLEEKQSCLKFKANDHGYDNFRSSNKYSSS. Residues C403, C404, and C406 are each lipidated (S-palmitoyl cysteine). S420 carries the post-translational modification Phosphoserine. At Y440 the chain carries Phosphotyrosine. Phosphoserine is present on residues S441, S442, and S443.

It belongs to the G-protein coupled receptor 1 family. Endothelin receptor subfamily. EDNRB sub-subfamily.

It is found in the cell membrane. Functionally, non-specific receptor for endothelin 1, 2, and 3. Mediates its action by association with G proteins that activate a phosphatidylinositol-calcium second messenger system. The sequence is that of Endothelin receptor type B (EDNRB) from Sus scrofa (Pig).